Here is a 126-residue protein sequence, read N- to C-terminus: Profilin (126 aa).

Belongs to the profilin family. As to quaternary structure, occurs in many kinds of cells as a complex with monomeric actin in a 1:1 ratio.

Its subcellular location is the cytoplasm. The protein localises to the cytoskeleton. Functionally, binds to actin and affects the structure of the cytoskeleton. At high concentrations, profilin prevents the polymerization of actin, whereas it enhances it at low concentrations. By binding to PIP2, it inhibits the formation of IP3 and DG. The sequence is that of Profilin (PFY1) from Saccharomyces cerevisiae (strain ATCC 204508 / S288c) (Baker's yeast).